Reading from the N-terminus, the 511-residue chain is Maturase K (511 aa).

The protein belongs to the intron maturase 2 family. MatK subfamily.

It is found in the plastid. It localises to the chloroplast. Its function is as follows. Usually encoded in the trnK tRNA gene intron. Probably assists in splicing its own and other chloroplast group II introns. The chain is Maturase K from Maihuenia poeppigii (Hardy cactus).